A 212-amino-acid chain; its full sequence is Sclerostin (212 aa).

The signal sequence occupies residues 1 to 23; it reads MQLSLALCLVCLLVHAAFRVVEG. Residue asparagine 52 is glycosylated (N-linked (GlcNAc...) asparagine). 4 disulfide bridges follow: cysteine 79/cysteine 133, cysteine 93/cysteine 147, cysteine 104/cysteine 164, and cysteine 108/cysteine 166. Residues 81–171 form the CTCK domain; sequence ELHFTRYVTD…ASCKCKRLTR (91 aa). Residue asparagine 174 is glycosylated (N-linked (GlcNAc...) asparagine). Positions 179-212 are disordered; sequence KDFGPEAARPQTGRKLRPRARGTKASRAELENAY. Over residues 190–202 the composition is skewed to basic residues; sequence TGRKLRPRARGTK.

The protein belongs to the sclerostin family. In terms of assembly, interacts with LRP4 (via the extracellular domain); the interaction facilitates the inhibition of Wnt signaling. Interacts with LRP5 (via the first two YWTD-EGF repeat domains); the interaction inhibits Wnt-mediated signaling. Interacts with LRP6.

Its subcellular location is the secreted. It localises to the extracellular space. The protein localises to the extracellular matrix. Negative regulator of bone growth that acts through inhibition of Wnt signaling and bone formation. The chain is Sclerostin from Bos taurus (Bovine).